Here is a 168-residue protein sequence, read N- to C-terminus: MNPNRSVAVDKVVVHMGVGEAGDKLVNAERIISEITGNTPVRSVAKQTLPAFGIRKGAPISCRVTLRGEAAEKFLETSIKIVENKINSRAFDKQGNFSFGIEEHTDYPGQSYDPKVGIFGLDVTVVLKRNGVRIARRHIQQKKLPLKQLVTVEDAKLFLKDRYNVEVQ.

It belongs to the universal ribosomal protein uL5 family. As to quaternary structure, part of the 50S ribosomal subunit; contacts the 5S rRNA and probably tRNA. Forms a bridge to the 30S subunit in the 70S ribosome.

In terms of biological role, this is one of the proteins that bind and probably mediate the attachment of the 5S RNA into the large ribosomal subunit, where it forms part of the central protuberance. In the 70S ribosome it contacts protein S13 of the 30S subunit (bridge B1b), connecting the 2 subunits; this bridge is implicated in subunit movement. May contact the P site tRNA; the 5S rRNA and some of its associated proteins might help stabilize positioning of ribosome-bound tRNAs. This is Large ribosomal subunit protein uL5 from Methanospirillum hungatei JF-1 (strain ATCC 27890 / DSM 864 / NBRC 100397 / JF-1).